Here is a 459-residue protein sequence, read N- to C-terminus: Cysteine--tRNA ligase (459 aa).

Zn(2+) is bound at residue Cys28. A 'HIGH' region motif is present at residues 30 to 40 (VTIYDLCHIGH). Zn(2+)-binding residues include Cys209, His234, and Glu238. The 'KMSKS' region motif lies at 266–270 (KMSKS). Lys269 provides a ligand contact to ATP.

This sequence belongs to the class-I aminoacyl-tRNA synthetase family. As to quaternary structure, monomer. It depends on Zn(2+) as a cofactor.

Its subcellular location is the cytoplasm. The enzyme catalyses tRNA(Cys) + L-cysteine + ATP = L-cysteinyl-tRNA(Cys) + AMP + diphosphate. The sequence is that of Cysteine--tRNA ligase from Shewanella loihica (strain ATCC BAA-1088 / PV-4).